The primary structure comprises 255 residues: tRNA1(Val) (adenine(37)-N6)-methyltransferase (255 aa).

This sequence belongs to the methyltransferase superfamily. tRNA (adenine-N(6)-)-methyltransferase family.

The protein resides in the cytoplasm. It catalyses the reaction adenosine(37) in tRNA1(Val) + S-adenosyl-L-methionine = N(6)-methyladenosine(37) in tRNA1(Val) + S-adenosyl-L-homocysteine + H(+). Functionally, specifically methylates the adenine in position 37 of tRNA(1)(Val) (anticodon cmo5UAC). This Porphyromonas gingivalis (strain ATCC 33277 / DSM 20709 / CIP 103683 / JCM 12257 / NCTC 11834 / 2561) protein is tRNA1(Val) (adenine(37)-N6)-methyltransferase.